Here is a 455-residue protein sequence, read N- to C-terminus: Bifunctional protein GlmU (455 aa).

The interval 1–227 (MGLSVIILAA…CEEVQGVNDR (227 aa)) is pyrophosphorylase. UDP-N-acetyl-alpha-D-glucosamine is bound by residues 8–11 (LAAG), K22, Q73, 78–79 (GT), 100–102 (YGD), G137, E152, N167, and N225. A Mg(2+)-binding site is contributed by D102. N225 is a Mg(2+) binding site. The segment at 228 to 248 (WELTKLERYYQRLMAKKLSLA) is linker. The interval 249–455 (GVTIIDPERF…KGWHRPTKKE (207 aa)) is N-acetyltransferase. 2 residues coordinate UDP-N-acetyl-alpha-D-glucosamine: R332 and K350. The active-site Proton acceptor is H362. Residues Y365 and N376 each contribute to the UDP-N-acetyl-alpha-D-glucosamine site. Residues A379, 385–386 (NY), S404, A422, and R439 contribute to the acetyl-CoA site.

In the N-terminal section; belongs to the N-acetylglucosamine-1-phosphate uridyltransferase family. This sequence in the C-terminal section; belongs to the transferase hexapeptide repeat family. Homotrimer. The cofactor is Mg(2+).

It is found in the cytoplasm. The enzyme catalyses alpha-D-glucosamine 1-phosphate + acetyl-CoA = N-acetyl-alpha-D-glucosamine 1-phosphate + CoA + H(+). The catalysed reaction is N-acetyl-alpha-D-glucosamine 1-phosphate + UTP + H(+) = UDP-N-acetyl-alpha-D-glucosamine + diphosphate. The protein operates within nucleotide-sugar biosynthesis; UDP-N-acetyl-alpha-D-glucosamine biosynthesis; N-acetyl-alpha-D-glucosamine 1-phosphate from alpha-D-glucosamine 6-phosphate (route II): step 2/2. It functions in the pathway nucleotide-sugar biosynthesis; UDP-N-acetyl-alpha-D-glucosamine biosynthesis; UDP-N-acetyl-alpha-D-glucosamine from N-acetyl-alpha-D-glucosamine 1-phosphate: step 1/1. It participates in bacterial outer membrane biogenesis; LPS lipid A biosynthesis. Functionally, catalyzes the last two sequential reactions in the de novo biosynthetic pathway for UDP-N-acetylglucosamine (UDP-GlcNAc). The C-terminal domain catalyzes the transfer of acetyl group from acetyl coenzyme A to glucosamine-1-phosphate (GlcN-1-P) to produce N-acetylglucosamine-1-phosphate (GlcNAc-1-P), which is converted into UDP-GlcNAc by the transfer of uridine 5-monophosphate (from uridine 5-triphosphate), a reaction catalyzed by the N-terminal domain. This is Bifunctional protein GlmU from Coxiella burnetii (strain CbuG_Q212) (Coxiella burnetii (strain Q212)).